We begin with the raw amino-acid sequence, 507 residues long: MAEEQARHVKNGLECIRALKAEPIGSLAIEEAMAAWSEISDNPGQERATCREEKAGSSGLSKPCLSAIGSTEGGAPRIRGQGPGESDDDAETLGIPPRNLQASSTGLQCYYVYDHSGEAVKGIQDADSIMVQSGLDGDSTLSGGDNESENSDVDIGEPDTEGYAITDRGSAPISMGFRASDVETAEGGEIHELLRLQSRGNNFPKLGKTLNVPPPPDPGRASTSGTPIKKGTERRLASFGTEIASLLTGGATQCARKSPSEPSGPGAPAGNVPEYVSNAALIQEWTPESGTTISPRSQNNEEGGDYYDDELFSDVQDIKTALAKIHEDNQKIISKLESLLLLKGEVESIKKQINRQNISISTLEGHLSSIMIAIPGLGKDPNDPTADVEINPDLKPIIGRDSGRALAEVLKKPVASRQLQGMTNGRTSSRGQLLKEFQPKPIGKKMSSAVGFVPDTGPASRSVIRSIIKSSRLEEDRKRYLMTLLDDIKGANDLAKFHQMLMKIIMK.

Residues 1–48 are interaction with N0; the sequence is MAEEQARHVKNGLECIRALKAEPIGSLAIEEAMAAWSEISDNPGQERA. 4 disordered regions span residues 41 to 99, 134 to 163, 201 to 231, and 250 to 273; these read DNPG…PPRN, GLDG…TEGY, NNFP…IKKG, and GATQ…GNVP. A Phosphoserine modification is found at S86. The segment covering 134 to 145 has biased composition (low complexity); sequence GLDGDSTLSGGD. Positions 146–160 are enriched in acidic residues; it reads NESENSDVDIGEPDT. A Phosphoserine modification is found at S151. A compositionally biased stretch (low complexity) spans 260–270; the sequence is SEPSGPGAPAG. The tract at residues 304 to 376 is multimerization; sequence GDYYDDELFS…LSSIMIAIPG (73 aa). Interaction with the L polymerase regions lie at residues 361-377 and 396-410; these read STLE…IPGL and PIIG…AEVL. Residues 457–507 form a x domain (XD) region; it reads GPASRSVIRSIIKSSRLEEDRKRYLMTLLDDIKGANDLAKFHQMLMKIIMK. The interval 459–507 is interaction with the nucleocapsid (N-RNA); the sequence is ASRSVIRSIIKSSRLEEDRKRYLMTLLDDIKGANDLAKFHQMLMKIIMK.

Belongs to the morbillivirus P protein family. In terms of assembly, homotetramer. Interacts (via multimerization domain and XD domain) with polymerase L; this interaction forms the polymerase L-P complex. Interacts (via N-terminus) with N0 (via Ncore); this interaction allows P to chaperon N0 to avoid N polymerization and non-specific RNA binding before encapsidation. Interacts (via C-terminus) with N-RNA template (via Ntail); this interaction maintains the P/L complex anchored to the nucleocapsid template during the sequential transcription. Interacts (via C-terminus) with protein C this interaction allows C to associate with the ribonucleocapsid. Post-translationally, phosphorylation on serines by host CK2 is necessary for the formation of viral factories.

Its function is as follows. Essential cofactor of the RNA polymerase L that plays a central role in the transcription and replication by forming the polymerase complex with RNA polymerase L and recruiting L to the genomic N-RNA template for RNA synthesis. Also plays a central role in the encapsidation of nascent RNA chains by forming the encapsidation complex with the nucleocapsid protein N (N-P complex). Acts as a chaperone for newly synthesized free N protein, so-called N0, allowing encapsidation of nascent RNA chains during replication. The nucleoprotein protein N prevents excessive phosphorylation of P, which leads to down-regulation of viral transcription/ replication. Participates, together with N, in the formation of viral factories (viroplasms), which are large inclusions in the host cytoplasm where replication takes place. This is Phosphoprotein (P/V) from Measles virus (strain Edmonston-AIK-C vaccine) (MeV).